Consider the following 304-residue polypeptide: Flagellin (304 aa).

The protein belongs to the bacterial flagellin family. As to quaternary structure, interacts with FliW in a 1:1 complex. Forms a 3-way complex of Hag, FliS and FliW, in which Flis and FliW do not directly interact.

It localises to the secreted. It is found in the bacterial flagellum. The protein localises to the cell wall. Flagellin is the subunit which polymerizes to form the filaments of bacterial flagella. Assembly into flagella requires FliW. Acts as a homeostatic autoinhibitory regulator to control its own cytoplasmic levels. Partner switching by flagellin between FliW and CsrA provides a flagellar assembly checkpoint to tightly control the timing of flagellin synthesis. Flagellin binds to assembly factor FliW, freeing translation regulator CsrA to repress translation of the flagellin mRNA. When the flagellar hook is assembled flagellin is secreted, depleting intracellular flagellin, which frees FliW to interact with CsrA. This derepresses flagellin translation and provides protein for flagellar assembly. Once the flagellar filament is completed cytoplasmic flagellin levels rise and CsrA translation repression of flagellin reinitiates. This Bacillus subtilis (strain 168) protein is Flagellin.